A 238-amino-acid chain; its full sequence is Small ribosomal subunit protein uS2 (238 aa).

The protein belongs to the universal ribosomal protein uS2 family.

This is Small ribosomal subunit protein uS2 from Synechococcus sp. (strain CC9605).